The primary structure comprises 520 residues: Poly(A)-specific ribonuclease PNLDC1 (520 aa).

Mg(2+)-binding residues include Asp17, Glu19, Asp260, and Asp354. Residues 497 to 513 (CLLQVCGIVTAWALLAF) traverse the membrane as a helical segment.

This sequence belongs to the CAF1 family. Mg(2+) is required as a cofactor.

The protein resides in the endoplasmic reticulum membrane. The enzyme catalyses Exonucleolytic cleavage of poly(A) to 5'-AMP.. In terms of biological role, 3'-exoribonuclease that has a preference for poly(A) tails of mRNAs, thereby efficiently degrading poly(A) tails. Exonucleolytic degradation of the poly(A) tail is often the first step in the decay of eukaryotic mRNAs and is also used to silence certain maternal mRNAs translationally during oocyte maturation and early embryonic development. May act as a regulator of multipotency in embryonic stem cells. Is a critical factor for proper spermatogenesis, involved in pre-piRNAs processing to generate mature piRNAs. The chain is Poly(A)-specific ribonuclease PNLDC1 from Pongo abelii (Sumatran orangutan).